Consider the following 285-residue polypeptide: NAD kinase (285 aa).

The Proton acceptor role is filled by Asp68. NAD(+) contacts are provided by residues 68 to 69 (DG), 142 to 143 (ND), Arg153, Lys170, Asp172, and Gln242.

This sequence belongs to the NAD kinase family. Requires a divalent metal cation as cofactor.

Its subcellular location is the cytoplasm. It carries out the reaction NAD(+) + ATP = ADP + NADP(+) + H(+). In terms of biological role, involved in the regulation of the intracellular balance of NAD and NADP, and is a key enzyme in the biosynthesis of NADP. Catalyzes specifically the phosphorylation on 2'-hydroxyl of the adenosine moiety of NAD to yield NADP. This is NAD kinase from Koribacter versatilis (strain Ellin345).